A 151-amino-acid chain; its full sequence is Large ribosomal subunit protein bL9 (151 aa).

This sequence belongs to the bacterial ribosomal protein bL9 family.

Binds to the 23S rRNA. This Pelobacter propionicus (strain DSM 2379 / NBRC 103807 / OttBd1) protein is Large ribosomal subunit protein bL9.